We begin with the raw amino-acid sequence, 521 residues long: Jacalin-related lectin 38 (521 aa).

An F-box domain is found at 2 to 48; that stretch reads MQPDHDLPYDLEGEILSHLPIQILARFRCVCKRWNTLFKERRFFNSD. Kelch repeat units lie at residues 145–190, 326–373, and 486–521; these read KHYK…PYSV, YIYI…ITQH, and MSFV…SPLP. The region spanning 377-519 is the Jacalin-type lectin domain; sequence SRFAPLRGIQ…LTAFGVHFSP (143 aa).

This sequence belongs to the jacalin lectin family.

In Arabidopsis thaliana (Mouse-ear cress), this protein is Jacalin-related lectin 38 (JAL38).